Here is a 512-residue protein sequence, read N- to C-terminus: Ribose import ATP-binding protein RbsA 1 (512 aa).

2 consecutive ABC transporter domains span residues 8-244 (FRME…IGRE) and 254-502 (AHRG…LNIA). 40 to 47 (GENGAGKS) provides a ligand contact to ATP.

Belongs to the ABC transporter superfamily. Ribose importer (TC 3.A.1.2.1) family. In terms of assembly, the complex is composed of an ATP-binding protein (RbsA), two transmembrane proteins (RbsC) and a solute-binding protein (RbsB).

It localises to the cell inner membrane. The catalysed reaction is D-ribose(out) + ATP + H2O = D-ribose(in) + ADP + phosphate + H(+). Part of the ABC transporter complex RbsABC involved in ribose import. Responsible for energy coupling to the transport system. This Rhizobium johnstonii (strain DSM 114642 / LMG 32736 / 3841) (Rhizobium leguminosarum bv. viciae) protein is Ribose import ATP-binding protein RbsA 1.